Consider the following 212-residue polypeptide: Thymidylate kinase (212 aa).

Gly-11 to Ser-18 lines the ATP pocket.

This sequence belongs to the thymidylate kinase family.

The catalysed reaction is dTMP + ATP = dTDP + ADP. Its function is as follows. Phosphorylation of dTMP to form dTDP in both de novo and salvage pathways of dTTP synthesis. This is Thymidylate kinase from Vibrio vulnificus (strain CMCP6).